Consider the following 192-residue polypeptide: ADP-ribosylation factor-like protein 4C (192 aa).

The N-myristoyl glycine moiety is linked to residue G2. GTP-binding positions include 20–27 (GLDSAGKT), 68–72 (DVGGQ), and 127–130 (NKQD).

The protein belongs to the small GTPase superfamily. Arf family. As to quaternary structure, interacts with CYTH2. Interacts with alpha tubulin; interaction is independent on the ARL4C GTP or GDP binding status. Expressed in several tumor cell lines (at protein level). Expressed in lung, brain, leukocytes and placenta.

It is found in the cell projection. It localises to the filopodium. The protein localises to the cell membrane. Its subcellular location is the cytoplasm. Small GTP-binding protein which cycles between an inactive GDP-bound and an active GTP-bound form, and the rate of cycling is regulated by guanine nucleotide exchange factors (GEF) and GTPase-activating proteins (GAP). GTP-binding protein that does not act as an allosteric activator of the cholera toxin catalytic subunit. May be involved in transport between a perinuclear compartment and the plasma membrane, apparently linked to the ABCA1-mediated cholesterol secretion pathway. Recruits CYTH1, CYTH2, CYTH3 and CYTH4 to the plasma membrane in the GDP-bound form. Regulates the microtubule-dependent intracellular vesicular transport from early endosome to recycling endosome process. The polypeptide is ADP-ribosylation factor-like protein 4C (ARL4C) (Homo sapiens (Human)).